The following is a 266-amino-acid chain: Glutaconate CoA-transferase subunit B (266 aa).

Glu54 is an active-site residue.

This sequence belongs to the 3-oxoacid CoA-transferase subunit B family. As to quaternary structure, heterooctamer of four A and four B subunits.

Its subcellular location is the cytoplasm. It catalyses the reaction trans-glutaconate + acetyl-CoA = (2E)-glutaconyl-CoA + acetate. The protein operates within amino-acid degradation; L-glutamate degradation via hydroxyglutarate pathway; crotonoyl-CoA from L-glutamate: step 3/5. Functionally, catalyzes the transfer of the CoA moiety from acetyl-CoA to (R)-2-hydroxyglutarate and related compounds like glutaconate. This chain is Glutaconate CoA-transferase subunit B (gctB), found in Acidaminococcus fermentans (strain ATCC 25085 / DSM 20731 / CCUG 9996 / CIP 106432 / VR4).